The chain runs to 419 residues: Carboxypeptidase A1 (419 aa).

The first 16 residues, methionine 1 to alanine 16, serve as a signal peptide directing secretion. A propeptide spans lysine 17–arginine 110 (activation peptide). The Peptidase M14 domain occupies threonine 121–threonine 414. Residues histidine 179 and glutamate 182 each coordinate Zn(2+). Residues histidine 179–glutamate 182, arginine 237, and asparagine 254–arginine 255 contribute to the substrate site. Cysteine 248 and cysteine 271 form a disulfide bridge. Histidine 306 provides a ligand contact to Zn(2+). Residues serine 307–tyrosine 308 and tyrosine 358 contribute to the substrate site. The active-site Proton donor/acceptor is the glutamate 380.

The protein belongs to the peptidase M14 family. As to quaternary structure, monomer. May form a complex with proelastase 2. Requires Zn(2+) as cofactor.

It localises to the secreted. The catalysed reaction is Release of a C-terminal amino acid, but little or no action with -Asp, -Glu, -Arg, -Lys or -Pro.. It carries out the reaction leukotriene C4 + H2O = leukotriene F4 + glycine. Functionally, carboxypeptidase that catalyzes the release of a C-terminal amino acid, but has little or no action with -Asp, -Glu, -Arg, -Lys or -Pro. Catalyzes the conversion of leukotriene C4 to leukotriene F4 via the hydrolysis of an amide bond. The sequence is that of Carboxypeptidase A1 (CPA1) from Sus scrofa (Pig).